Reading from the N-terminus, the 331-residue chain is Biotin synthase (331 aa).

The Radical SAM core domain occupies 53–271; that stretch reads TELQLSQLLS…IAVARIVCPK (219 aa). Residues Cys-68, Cys-72, and Cys-75 each coordinate [4Fe-4S] cluster. [2Fe-2S] cluster contacts are provided by Cys-112, Cys-143, Cys-203, and Arg-275.

It belongs to the radical SAM superfamily. Biotin synthase family. Homodimer. The cofactor is [4Fe-4S] cluster. It depends on [2Fe-2S] cluster as a cofactor.

It catalyses the reaction (4R,5S)-dethiobiotin + (sulfur carrier)-SH + 2 reduced [2Fe-2S]-[ferredoxin] + 2 S-adenosyl-L-methionine = (sulfur carrier)-H + biotin + 2 5'-deoxyadenosine + 2 L-methionine + 2 oxidized [2Fe-2S]-[ferredoxin]. Its pathway is cofactor biosynthesis; biotin biosynthesis; biotin from 7,8-diaminononanoate: step 2/2. Catalyzes the conversion of dethiobiotin (DTB) to biotin by the insertion of a sulfur atom into dethiobiotin via a radical-based mechanism. In Phenylobacterium zucineum (strain HLK1), this protein is Biotin synthase.